Consider the following 614-residue polypeptide: Acetylcholinesterase (614 aa).

The first 31 residues, 1–31 (MRPPWYPLHTPSLASPLLFLLLSLLGGGARA), serve as a signal peptide directing secretion. C100 and C127 are oxidised to a cystine. S234 functions as the Acyl-ester intermediate in the catalytic mechanism. An intrachain disulfide couples C288 to C303. N-linked (GlcNAc...) asparagine glycosylation occurs at N296. E365 (charge relay system) is an active-site residue. Residue N381 is glycosylated (N-linked (GlcNAc...) asparagine). The cysteines at positions 440 and 560 are disulfide-linked. The active-site Charge relay system is the H478. N495 carries N-linked (GlcNAc...) asparagine glycosylation.

Belongs to the type-B carboxylesterase/lipase family. Homotetramer; composed of disulfide-linked homodimers. Catalytic forms H (GPI-anchor dimer) and T (asymmetric collagen-tailed), which differ in their C-terminus, account for all types of known ACHE forms. Interacts with PRIMA1. The interaction with PRIMA1 is required to anchor it to the basal lamina of cells and organize into tetramers. As to expression, has been found in central nervous system and muscle. Found in embryonic liver and spleen but not in adult liver.

Its subcellular location is the synapse. It is found in the secreted. It localises to the cell membrane. The catalysed reaction is acetylcholine + H2O = choline + acetate + H(+). In terms of biological role, terminates signal transduction at the neuromuscular junction by rapid hydrolysis of the acetylcholine released into the synaptic cleft. The protein is Acetylcholinesterase (Ache) of Rattus norvegicus (Rat).